A 33-amino-acid chain; its full sequence is Neurotoxin Nk-3FTx (33 aa).

Intrachain disulfides connect Cys-3–Cys-24 and Cys-6–Cys-11.

Expressed by the venom gland.

The protein resides in the secreted. Its function is as follows. Possible voltage-gated potassium channel (Kv) blocker. Decreases amplitude of compound action potential and conduction velocity in toad sciatic nerve. Has only mild anticoagulant activity even at a concentration of 5ug/ml. Shows no cytotoxicity towards human cell lines. The sequence is that of Neurotoxin Nk-3FTx from Naja kaouthia (Monocled cobra).